The following is a 350-amino-acid chain: Phenylalanine--tRNA ligase alpha subunit (350 aa).

Glutamate 257 contacts Mg(2+).

Belongs to the class-II aminoacyl-tRNA synthetase family. Phe-tRNA synthetase alpha subunit type 1 subfamily. Tetramer of two alpha and two beta subunits. It depends on Mg(2+) as a cofactor.

The protein resides in the cytoplasm. The enzyme catalyses tRNA(Phe) + L-phenylalanine + ATP = L-phenylalanyl-tRNA(Phe) + AMP + diphosphate + H(+). The sequence is that of Phenylalanine--tRNA ligase alpha subunit from Listeria monocytogenes serotype 4b (strain CLIP80459).